Here is a 516-residue protein sequence, read N- to C-terminus: Calcium and calcium/calmodulin-dependent serine/threonine-protein kinase (516 aa).

One can recognise a Protein kinase domain in the interval 13 to 298 (YEVVDVLGRG…ASDLLRHPWV (286 aa)). Residues 19–27 (LGRGGFSIV) and K43 contribute to the ATP site. D163 (proton acceptor) is an active-site residue. T263 is subject to Phosphothreonine. The calmodulin-binding stretch occupies residues 321–334 (ARRKLRAAAIASVL). Residues 343–363 (KRLRNLLGTHDLTSEELDNLR) are a coiled coil. 3 EF-hand domains span residues 392–427 (SLIPLAPRVFDLFDNNRDGTVDMREILCGFSSLRNS), 428–463 (RGDDALRLCFQMYDADRSGCISKEELASMLRALPEE), and 470–505 (TEPGKLDEVFDQMDADSDGKVTFDEFKAAMNKDSAL). Residues D405, N407, D409, T411, E416, D441, D443, S445, C447, E452, D483, D485, D487, K489, and E494 each coordinate Ca(2+).

This sequence belongs to the protein kinase superfamily. CAMK Ser/Thr protein kinase family. CaMK subfamily. Post-translationally, autophosphorylation. Mainly expressed in roots and panicles. Detected in leaves, shoots and culms.

The protein resides in the nucleus. The protein localises to the cytoplasm. Its subcellular location is the cell membrane. It carries out the reaction L-seryl-[protein] + ATP = O-phospho-L-seryl-[protein] + ADP + H(+). The catalysed reaction is L-threonyl-[protein] + ATP = O-phospho-L-threonyl-[protein] + ADP + H(+). Calcium- and calmodulin-dependent protein kinase required for arbuscular mycorrhizal (AM) symbiosis. Involved in response to water deprivation stress. Required for abscisic acid-induced antioxidant defense and oxidative stress tolerance during dehydration stress. Functions upstream of MPK1 in an abscisic acid signaling pathway that regulates the activities of antioxidant enzymes and the production of hydrogen peroxide. This is Calcium and calcium/calmodulin-dependent serine/threonine-protein kinase (CCAMK) from Oryza sativa subsp. japonica (Rice).